Here is a 136-residue protein sequence, read N- to C-terminus: MITDPIADMIARINNAIKARKDEVSVPTSKIKEQLSEILKREGYIEDYVVSEENKKGNQGTLIIKLKYLGRRNTKPAISKIQRVSKPGLRKYVSVDEMPYVQKGLGIAILTTNKGIMTDSEARKQRLGGEIICYVW.

Belongs to the universal ribosomal protein uS8 family. In terms of assembly, part of the 30S ribosomal subunit. Contacts proteins S5 and S12.

One of the primary rRNA binding proteins, it binds directly to 16S rRNA central domain where it helps coordinate assembly of the platform of the 30S subunit. This Sulfurihydrogenibium sp. (strain YO3AOP1) protein is Small ribosomal subunit protein uS8.